We begin with the raw amino-acid sequence, 497 residues long: Glycerol kinase (497 aa).

T12 lines the ADP pocket. 3 residues coordinate ATP: T12, T13, and S14. A sn-glycerol 3-phosphate-binding site is contributed by T12. Position 16 (R16) interacts with ADP. 4 residues coordinate sn-glycerol 3-phosphate: R82, E83, Y134, and D243. Glycerol contacts are provided by R82, E83, Y134, D243, and Q244. The ADP site is built by T265 and G308. ATP is bound by residues T265, G308, Q312, and G411. G411 provides a ligand contact to ADP.

Belongs to the FGGY kinase family.

It carries out the reaction glycerol + ATP = sn-glycerol 3-phosphate + ADP + H(+). It functions in the pathway polyol metabolism; glycerol degradation via glycerol kinase pathway; sn-glycerol 3-phosphate from glycerol: step 1/1. With respect to regulation, inhibited by fructose 1,6-bisphosphate (FBP). Its function is as follows. Key enzyme in the regulation of glycerol uptake and metabolism. Catalyzes the phosphorylation of glycerol to yield sn-glycerol 3-phosphate. The polypeptide is Glycerol kinase (Xanthobacter autotrophicus (strain ATCC BAA-1158 / Py2)).